Reading from the N-terminus, the 677-residue chain is MDRGSALPAEISPQLLRPLAYRVLSKKYGLHIKSDGLAQLAKFIGNAFGVDWRRSAETMQFLERFAAIWREQERGLFVDALGVDAVTQELRERNKTAKQRRPARARETTLDALVRPTEAYSAVESSGGDVTATEPMDEDTVREEPLDWTHYFKVIDTFSQQQFTYDVTKRRYRLVQQRESAAGPLSTLLRIPSLEANLAQFPTRYHLVRDRVLRNASFQNDDVYNPLSSMQQLQQQLDAGGAPLASTAYMSITQIKNLLGRDGKNFLLLGLIRKDSKGFWSLEDPSGSIEIDISETYPTKGTYYVPGCIVLAEGIYSSAGNRFRVSSITHPPGERREAFLEAIGNLDLLGIHGPSNESYISRLDKELKIRLHYLEKELTDHRFVFLGGNIFLDDTMTETALAKLFDVLEHDPPTVLVLPGSFTSTPIYPSSDSKSSSSTAAYRANFDALAKLLSKYERLINETTFVFIPGDNDPWGSMAYLGVAGTLPQHPIPGDFVTKVNRICKHVVWGSNPTRIAYLSQELVIMRDDMCNRFKRNSIIFPTVEEEQKQEYMLLQQELQDDERSSDLSISQLIKSRDQLPASVQESRKIVKTILDQQHLSPFTSQVRPITWDYDYTLHLSPIPSTMIICDPTAPKYDVTYNGCKSINPGSFLHKRSVNYTEYTPSLRKATEEEIVV.

This sequence belongs to the DNA polymerase epsilon subunit B family. In terms of assembly, heterotetramer. Consists of four subunits: POL2, DPB2, DPB3 and DPB4.

The protein localises to the nucleus. As accessory component of the DNA polymerase epsilon (DNA polymerase II) participates in chromosomal DNA replication. The polypeptide is DNA polymerase epsilon subunit B (DPB2) (Eremothecium gossypii (strain ATCC 10895 / CBS 109.51 / FGSC 9923 / NRRL Y-1056) (Yeast)).